Here is a 2225-residue protein sequence, read N- to C-terminus: Multifunctional protein pyr1-3 (2225 aa).

At M1 the chain carries N-acetylmethionine. Positions 40–390 (MVGYNESISD…NVCGEQQHKS (351 aa)) are GATase (Glutamine amidotransferase). L-glutamine contacts are provided by S51, G245, and G247. The 193-residue stretch at 196–388 (KVIVLDCGIK…VDNVCGEQQH (193 aa)) folds into the Glutamine amidotransferase type-1 domain. C275 serves as the catalytic Nucleophile; for GATase activity. L-glutamine is bound by residues Q279, N317, G319, and F320. Active-site for GATase activity residues include H361 and E363. The linker stretch occupies residues 391 to 405 (PMNKSKIIDCPKGIN). The segment at 406–948 (KVLILGSGGL…TNDVNINEKS (543 aa)) is CPSase A. Positions 406–1461 (KVLILGSGGL…MKGPMPIENV (1056 aa)) are CPSase (Carbamoyl-phosphate synthase). Positions 526, 566, 572, 573, 603, 610, 636, 637, 638, 679, and 693 each coordinate ATP. ATP-grasp domains lie at 530-722 (AEKL…KVAL) and 1069-1260 (SRLL…KIII). Mg(2+) is bound by residues Q679, E693, and N695. 3 residues coordinate Mn(2+): Q679, E693, and N695. Positions 949–1461 (YITLGSGSYR…MKGPMPIENV (513 aa)) are CPSase B. Positions 1105, 1144, 1146, 1151, 1176, 1177, 1178, 1179, 1219, and 1231 each coordinate ATP. Mg(2+) is bound by residues Q1219, E1231, and N1233. Mn(2+) contacts are provided by Q1219, E1231, and N1233. The MGS-like domain occupies 1324-1470 (FKAPEKNVLL…VDWRTSNKII (147 aa)). Residues 1463-1797 (WRTSNKIIRL…VRGKVVKVVL (335 aa)) form a DHOase (dihydroorotase) region. Zn(2+) is bound by residues H1479 and H1481. Residues R1483 and N1513 each coordinate (S)-dihydroorotate. Zn(2+) is bound by residues K1564, H1599, C1622, H1623, and E1646. K1564 bears the N6-carboxylysine mark. Position 1670 (R1670) interacts with (S)-dihydroorotate. D1695 is a binding site for Zn(2+). The active-site For DHOase activity is D1695. Residues H1699 and P1711 each contribute to the (S)-dihydroorotate site. The tract at residues 1798 to 1916 (RGQIAFIDGK…DTLQTAFNIS (119 aa)) is linker. The ATCase (Aspartate transcarbamylase) stretch occupies residues 1917 to 2225 (DNSLAGKHIF…LLALVFGAGV (309 aa)). 2 residues coordinate carbamoyl phosphate: R1974 and T1975. K2002 provides a ligand contact to L-aspartate. 3 residues coordinate carbamoyl phosphate: R2023, H2051, and Q2054. 2 residues coordinate L-aspartate: R2084 and R2145. L2184 and P2185 together coordinate carbamoyl phosphate.

In the N-terminal section; belongs to the CarA family. It in the 2nd section; belongs to the CarB family. The protein in the 3rd section; belongs to the metallo-dependent hydrolases superfamily. DHOase family. CAD subfamily. This sequence in the C-terminal section; belongs to the aspartate/ornithine carbamoyltransferase superfamily. ATCase family. Homohexamer. The cofactor is Mg(2+). It depends on Mn(2+) as a cofactor. Zn(2+) is required as a cofactor.

The protein localises to the cytoplasm. It catalyses the reaction hydrogencarbonate + L-glutamine + 2 ATP + H2O = carbamoyl phosphate + L-glutamate + 2 ADP + phosphate + 2 H(+). The enzyme catalyses L-glutamine + H2O = L-glutamate + NH4(+). It carries out the reaction hydrogencarbonate + NH4(+) + 2 ATP = carbamoyl phosphate + 2 ADP + phosphate + 2 H(+). The catalysed reaction is carbamoyl phosphate + L-aspartate = N-carbamoyl-L-aspartate + phosphate + H(+). It catalyses the reaction (S)-dihydroorotate + H2O = N-carbamoyl-L-aspartate + H(+). It functions in the pathway pyrimidine metabolism; UMP biosynthesis via de novo pathway; (S)-dihydroorotate from bicarbonate: step 1/3. Its pathway is pyrimidine metabolism; UMP biosynthesis via de novo pathway; (S)-dihydroorotate from bicarbonate: step 2/3. It participates in pyrimidine metabolism; UMP biosynthesis via de novo pathway; (S)-dihydroorotate from bicarbonate: step 3/3. Its activity is regulated as follows. Allosterically regulated and controlled by phosphorylation. 5-phosphoribose 1-diphosphate is an activator while UMP is an inhibitor of the CPSase reaction. In terms of biological role, multifunctional protein that encodes the first 3 enzymatic activities of the de novo pyrimidine pathway: carbamoylphosphate synthetase (CPSase; EC 6.3.5.5), aspartate transcarbamylase (ATCase; EC 2.1.3.2) and dihydroorotase (DHOase; EC 3.5.2.3). The CPSase-function is accomplished in 2 steps, by a glutamine-dependent amidotransferase activity (GATase) that binds and cleaves glutamine to produce ammonia, followed by an ammonium-dependent carbamoyl phosphate synthetase, which reacts with the ammonia, hydrogencarbonate and ATP to form carbamoyl phosphate. The endogenously produced carbamoyl phosphate is sequestered and channeled to the ATCase active site. ATCase then catalyzes the formation of carbamoyl-L-aspartate from L-aspartate and carbamoyl phosphate. In the last step, DHOase catalyzes the cyclization of carbamoyl aspartate to dihydroorotate. This chain is Multifunctional protein pyr1-3 (pyr1-3), found in Dictyostelium discoideum (Social amoeba).